The chain runs to 362 residues: MLQNQTRKLRVLVVDDSSFMRMVIRSVLEKDPAIEVVGIAVDGMEGVEKALALKPDLITMDIEMPRLDGISALKQVMAKCPTRVLMVSTLTCEGAKATFDALDAGAIDYIPKNVTDSADAQRVFREELLRKVKGAASSIFGRPMTTSAPRAIIAPPRQVQPAPRPSQALAGKFHYVGIGASTGGPVALQEVLGRIPGNYPHGIVVAIHMPKAFTGPYAERLNSKCSLQIKEANDGDIIQPGVVLVAPGGRHMALARQGNSIVVRTLSTAECPQYIYIPSVDHMMTTLADATNGSALGVILTGMGSDGFKGMKHLKSKGGITIVQDEATSTIYGMPRACIEGGVADTVLPLTQIGSEIARLGG.

In terms of domain architecture, Response regulatory spans 10–127; it reads RVLVVDDSSF…ADAQRVFREE (118 aa). A 4-aspartylphosphate modification is found at Asp-61. The region spanning 163-357 is the CheB-type methylesterase domain; sequence PRPSQALAGK…LPLTQIGSEI (195 aa). Catalysis depends on residues Ser-181, His-208, and Asp-306.

Belongs to the CheB family. In terms of processing, phosphorylated by CheA. Phosphorylation of the N-terminal regulatory domain activates the methylesterase activity.

Its subcellular location is the cytoplasm. The enzyme catalyses [protein]-L-glutamate 5-O-methyl ester + H2O = L-glutamyl-[protein] + methanol + H(+). It catalyses the reaction L-glutaminyl-[protein] + H2O = L-glutamyl-[protein] + NH4(+). In terms of biological role, involved in chemotaxis. Part of a chemotaxis signal transduction system that modulates chemotaxis in response to various stimuli. Catalyzes the demethylation of specific methylglutamate residues introduced into the chemoreceptors (methyl-accepting chemotaxis proteins or MCP) by CheR. Also mediates the irreversible deamidation of specific glutamine residues to glutamic acid. The polypeptide is Protein-glutamate methylesterase/protein-glutamine glutaminase 1 (Geobacter sulfurreducens (strain ATCC 51573 / DSM 12127 / PCA)).